The sequence spans 143 residues: Transcriptional regulator MraZ (143 aa).

SpoVT-AbrB domains are found at residues 5-47 (THHP…PRAE) and 76-119 (TDEQ…NAER).

Belongs to the MraZ family. As to quaternary structure, forms oligomers.

It is found in the cytoplasm. It localises to the nucleoid. The chain is Transcriptional regulator MraZ from Saccharopolyspora erythraea (strain ATCC 11635 / DSM 40517 / JCM 4748 / NBRC 13426 / NCIMB 8594 / NRRL 2338).